Reading from the N-terminus, the 343-residue chain is Ubiquitin thioesterase OTU1 (343 aa).

The segment at 45 to 123 (RCKAKGGTHV…IVEEDQTRPK (79 aa)) is UBX-like. Residues 144–269 (LTRTAVPADN…GIHYDPLQRN (126 aa)) form the OTU domain. Residues 149–155 (VPADNSC) form a cys-loop region. Residue Asp-152 is part of the active site. The active-site Nucleophile is the Cys-155. The variable-loop stretch occupies residues 208-218 (IRRDDTWGGAI). The his-loop stretch occupies residues 258-262 (YDGIH). Residue Ile-261 coordinates substrate. Residue His-262 is part of the active site. Residues 286–291 (DIVLVQ) are S2 site. The C2H2-type zinc finger occupies 313-337 (LRCMLCQKGLTGQAEARDHARETGH). Residue His-337 is part of the active site.

Interacts with VCP; the interaction is direct. Interacts with FAF2/UBXD8. Interacts with DERL1; however interaction is dependent on the UBAX-like region, suggesting that it may be indirect. Interacts with PLAA, UBXN6 and VCP; may form a complex involved in macroautophagy.

It localises to the cytoplasm. It carries out the reaction Thiol-dependent hydrolysis of ester, thioester, amide, peptide and isopeptide bonds formed by the C-terminal Gly of ubiquitin (a 76-residue protein attached to proteins as an intracellular targeting signal).. Hydrolase that can remove conjugated ubiquitin from proteins and participates in endoplasmic reticulum-associated degradation (ERAD) for misfolded lumenal proteins. May act by triming the ubiquitin chain on the associated substrate to facilitate their threading through the VCP/p97 pore. Ubiquitin moieties on substrates may present a steric impediment to the threading process when the substrate is transferred to the VCP pore and threaded through VCP's axial channel. Mediates deubiquitination of 'Lys-27'-, 'Lys-29'- and 'Lys-33'-linked polyubiquitin chains. Also able to hydrolyze 'Lys-11'-linked ubiquitin chains. Cleaves both polyubiquitin and di-ubiquitin. May play a role in macroautophagy, regulating for instance the clearance of damaged lysosomes. May recruit PLAA, UBXN6 and VCP to damaged lysosome membranes decorated with K48-linked ubiquitin chains and remove these chains allowing autophagosome formation. This Rattus norvegicus (Rat) protein is Ubiquitin thioesterase OTU1 (Yod1).